We begin with the raw amino-acid sequence, 325 residues long: SPbeta prophage-derived uncharacterized protein YopR (325 aa).

The polypeptide is SPbeta prophage-derived uncharacterized protein YopR (yopR) (Bacillus subtilis (strain 168)).